A 287-amino-acid chain; its full sequence is Cyclopropane mycolic acid synthase 1 (287 aa).

S-adenosyl-L-methionine-binding positions include 33–34 (YS), 68–76 (LLDVGCGWG), 94–99 (TLSKNQ), and 123–124 (WE). The active site involves Cys269.

It belongs to the CFA/CMAS family. In terms of assembly, homodimer.

It is found in the cytoplasm. It carries out the reaction a 1-acyl-2-(9Z)-enoyl-sn-glycero-3-phospholipid + S-adenosyl-L-methionine = a 1-acyl-2-(9-cyclopronane)-acyl-sn-glycero-3-phospholipid + S-adenosyl-L-homocysteine + H(+). The protein operates within lipid metabolism; mycolic acid biosynthesis. Its function is as follows. Catalyzes the conversion of a double bond to a cyclopropane ring at the distal position of an alpha mycolic acid via the transfer of a methylene group from S-adenosyl-L-methionine. Cyclopropanated mycolic acids are key factors participating in cell envelope permeability, host immunomodulation and persistence. The chain is Cyclopropane mycolic acid synthase 1 (cmaA1) from Mycobacterium tuberculosis (strain CDC 1551 / Oshkosh).